We begin with the raw amino-acid sequence, 158 residues long: MSVEVTVEIPKGSRNKYEIDHETGKVYLDRYLFTPMAYPLDYGFIDHTLGEDGDPMDALVILPESVFPNVIVKSRVIGVFKMTDEAGGDDKLLAVLDDPRYDHIQDISDVSDFLKDEIEHFFVHYKDLEKGKHVDGSGWGDKAEAEQILADSIERYKA.

Residue glutamate 8 coordinates Mg(2+). Residues lysine 16, arginine 30, and tyrosine 42 each contribute to the substrate site. 4 residues coordinate Mg(2+): aspartate 52, aspartate 57, aspartate 84, and aspartate 89. Aspartate 89 serves as the catalytic Proton acceptor. Position 125 (tyrosine 125) interacts with substrate.

It belongs to the PPase family. In terms of assembly, homohexamer. The cofactor is Mg(2+).

The protein localises to the cytoplasm. It catalyses the reaction diphosphate + H2O = 2 phosphate + H(+). Its function is as follows. Catalyzes the hydrolysis of inorganic pyrophosphate (PPi) forming two phosphate ions. This is Inorganic pyrophosphatase from Corynebacterium efficiens (strain DSM 44549 / YS-314 / AJ 12310 / JCM 11189 / NBRC 100395).